Here is a 391-residue protein sequence, read N- to C-terminus: Phosphoglycerate kinase (391 aa).

Substrate is bound by residues aspartate 21–asparagine 23, arginine 36, histidine 59–arginine 62, arginine 113, and arginine 146. Residues lysine 197, glutamate 319, and glycine 345–threonine 348 contribute to the ATP site.

It belongs to the phosphoglycerate kinase family. In terms of assembly, monomer.

It is found in the cytoplasm. It catalyses the reaction (2R)-3-phosphoglycerate + ATP = (2R)-3-phospho-glyceroyl phosphate + ADP. Its pathway is carbohydrate degradation; glycolysis; pyruvate from D-glyceraldehyde 3-phosphate: step 2/5. In Shewanella sp. (strain ANA-3), this protein is Phosphoglycerate kinase.